Reading from the N-terminus, the 207-residue chain is Outer-membrane lipoprotein LolB (207 aa).

An N-terminal signal peptide occupies residues 1-21; it reads MPMRKRHFYRLLPLASLLLAA. The N-palmitoyl cysteine moiety is linked to residue cysteine 22. Residue cysteine 22 is the site of S-diacylglycerol cysteine attachment.

This sequence belongs to the LolB family. As to quaternary structure, monomer.

The protein localises to the cell outer membrane. Plays a critical role in the incorporation of lipoproteins in the outer membrane after they are released by the LolA protein. The chain is Outer-membrane lipoprotein LolB from Yersinia pseudotuberculosis serotype O:3 (strain YPIII).